A 345-amino-acid polypeptide reads, in one-letter code: 3-dehydroquinate synthase (345 aa).

Residues 62 to 67, 96 to 100, 120 to 121, Lys-133, Lys-142, and 160 to 163 each bind NAD(+); these read DGEEYK, GVISD, TT, and FLKT. Glu-175, His-233, and His-250 together coordinate Zn(2+).

This sequence belongs to the sugar phosphate cyclases superfamily. Dehydroquinate synthase family. It depends on Co(2+) as a cofactor. The cofactor is Zn(2+). NAD(+) is required as a cofactor.

The protein resides in the cytoplasm. It carries out the reaction 7-phospho-2-dehydro-3-deoxy-D-arabino-heptonate = 3-dehydroquinate + phosphate. Its pathway is metabolic intermediate biosynthesis; chorismate biosynthesis; chorismate from D-erythrose 4-phosphate and phosphoenolpyruvate: step 2/7. Catalyzes the conversion of 3-deoxy-D-arabino-heptulosonate 7-phosphate (DAHP) to dehydroquinate (DHQ). The sequence is that of 3-dehydroquinate synthase from Campylobacter concisus (strain 13826).